The following is a 505-amino-acid chain: Sucrose porin (505 aa).

The first 22 residues, 1-22, serve as a signal peptide directing secretion; the sequence is MYKKRKLAILIALLTGTAAAHG. Residues 44–94 are disordered; it reads ETRASTAESRAASAEQKVQQLTQQQQQTQATTQQVARRTTQLEEKAERPGG. A compositionally biased stretch (low complexity) spans 46–82; that stretch reads RASTAESRAASAEQKVQQLTQQQQQTQATTQQVARRT. The segment covering 83–93 has biased composition (basic and acidic residues); the sequence is TQLEEKAERPG.

Belongs to the porin LamB (TC 1.B.3) family. As to quaternary structure, homotrimer.

It localises to the cell outer membrane. In terms of biological role, porin for sucrose uptake. The polypeptide is Sucrose porin (scrY) (Klebsiella pneumoniae).